We begin with the raw amino-acid sequence, 973 residues long: Sodium/calcium exchanger 1 (973 aa).

The signal sequence occupies residues Met-1 to Ala-35. Topologically, residues Glu-36–Lys-74 are extracellular. Asn-44 carries an N-linked (GlcNAc...) asparagine glycan. Residues Ile-75–Ile-95 form a helical membrane-spanning segment. Residues Ala-96–Asn-136 lie on the Cytoplasmic side of the membrane. A helical membrane pass occupies residues Leu-137–Cys-157. Residues Ala-141–Ile-181 form an Alpha-1 repeat. Topologically, residues Gly-158–Thr-170 are extracellular. Asn-160 is a glycosylation site (N-linked (GlcNAc...) asparagine). Residues Ile-171–Pro-191 form a helical membrane-spanning segment. Residues Asp-192–Phe-204 lie on the Cytoplasmic side of the membrane. The chain crosses the membrane as a helical span at residues Phe-205–Ile-225. Residues Ser-226–Glu-231 are Extracellular-facing. The helical transmembrane segment at Val-232–Ala-252 threads the bilayer. At Asp-253–Gly-800 the chain is on the cytoplasmic side. The putative calmodulin-binding region stretch occupies residues Arg-254–Gly-273. Phosphoserine occurs at positions 285 and 392. 2 Calx-beta domains span residues Val-396–Ser-496 and Ala-527–Gly-627. Residues Glu-420, Asp-456, Asp-481, Asp-482, Ile-484, Glu-486, Glu-489, Asp-533, Asp-534, Asp-535, Glu-551, Asp-587, Asp-613, Glu-614, Glu-615, and Glu-718 each coordinate Ca(2+). A helical membrane pass occupies residues Trp-801–Leu-821. At Ala-822 to His-824 the chain is on the extracellular side. The chain crosses the membrane as a helical span at residues Phe-825–Thr-845. One copy of the Alpha-2 repeat lies at Ala-842–Val-878. Residues Ser-846–Asn-874 are Cytoplasmic-facing. A helical transmembrane segment spans residues Ala-875–Ala-895. Over Asn-896–Thr-906 the chain is Extracellular. A helical transmembrane segment spans residues Leu-907–Tyr-927. The Cytoplasmic segment spans residues Arg-928 to Lys-944. A helical membrane pass occupies residues Leu-945–Glu-965. Over Ala-966 to Phe-973 the chain is Extracellular.

The protein belongs to the Ca(2+):cation antiporter (CaCA) (TC 2.A.19) family. SLC8 subfamily. As to expression, detected primarily in heart and at lower levels in brain. Expressed in cardiac sarcolemma, brain, kidney, liver, pancreas, skeletal muscle, placenta and lung.

It is found in the cell membrane. The enzyme catalyses Ca(2+)(in) + 3 Na(+)(out) = Ca(2+)(out) + 3 Na(+)(in). With respect to regulation, activated by micromolar levels of Ca(2+). In terms of biological role, mediates the exchange of one Ca(2+) ion against three to four Na(+) ions across the cell membrane, and thereby contributes to the regulation of cytoplasmic Ca(2+) levels and Ca(2+)-dependent cellular processes. Contributes to Ca(2+) transport during excitation-contraction coupling in muscle. In a first phase, voltage-gated channels mediate the rapid increase of cytoplasmic Ca(2+) levels due to release of Ca(2+) stores from the endoplasmic reticulum. SLC8A1 mediates the export of Ca(2+) from the cell during the next phase, so that cytoplasmic Ca(2+) levels rapidly return to baseline. Required for normal embryonic heart development and the onset of heart contractions. The chain is Sodium/calcium exchanger 1 (SLC8A1) from Homo sapiens (Human).